A 197-amino-acid polypeptide reads, in one-letter code: 3-isopropylmalate dehydratase small subunit (197 aa).

This sequence belongs to the LeuD family. LeuD type 1 subfamily. As to quaternary structure, heterodimer of LeuC and LeuD.

The enzyme catalyses (2R,3S)-3-isopropylmalate = (2S)-2-isopropylmalate. The protein operates within amino-acid biosynthesis; L-leucine biosynthesis; L-leucine from 3-methyl-2-oxobutanoate: step 2/4. Functionally, catalyzes the isomerization between 2-isopropylmalate and 3-isopropylmalate, via the formation of 2-isopropylmaleate. This Corynebacterium glutamicum (strain ATCC 13032 / DSM 20300 / JCM 1318 / BCRC 11384 / CCUG 27702 / LMG 3730 / NBRC 12168 / NCIMB 10025 / NRRL B-2784 / 534) protein is 3-isopropylmalate dehydratase small subunit.